A 227-amino-acid polypeptide reads, in one-letter code: ATP synthase F(0) complex subunit a (227 aa).

6 helical membrane passes run 14–34 (LLGIPLILLSLLFPTLLLPSP), 69–89 (WALILTSLMTFLLLINLLGLL), 98–118 (QLSMNMALAFPLWLATLLTGL), 139–159 (IPALILIETTSLLIRPLALGV), 174–194 (LISTATLALLPTMPTISVLTA), and 196–216 (VLLLLTILELAVAMIQAYVFV).

The protein belongs to the ATPase A chain family. In terms of assembly, component of the ATP synthase complex composed at least of ATP5F1A/subunit alpha, ATP5F1B/subunit beta, ATP5MC1/subunit c (homooctomer), MT-ATP6/subunit a, MT-ATP8/subunit 8, ATP5ME/subunit e, ATP5MF/subunit f, ATP5MG/subunit g, ATP5MK/subunit k, ATP5MJ/subunit j, ATP5F1C/subunit gamma, ATP5F1D/subunit delta, ATP5F1E/subunit epsilon, ATP5PF/subunit F6, ATP5PB/subunit b, ATP5PD/subunit d, ATP5PO/subunit OSCP. ATP synthase complex consists of a soluble F(1) head domain (subunits alpha(3) and beta(3)) - the catalytic core - and a membrane F(0) domain - the membrane proton channel (subunits c, a, 8, e, f, g, k and j). These two domains are linked by a central stalk (subunits gamma, delta, and epsilon) rotating inside the F1 region and a stationary peripheral stalk (subunits F6, b, d, and OSCP). Interacts with DNAJC30; interaction is direct.

It localises to the mitochondrion inner membrane. The enzyme catalyses H(+)(in) = H(+)(out). Subunit a, of the mitochondrial membrane ATP synthase complex (F(1)F(0) ATP synthase or Complex V) that produces ATP from ADP in the presence of a proton gradient across the membrane which is generated by electron transport complexes of the respiratory chain. ATP synthase complex consist of a soluble F(1) head domain - the catalytic core - and a membrane F(1) domain - the membrane proton channel. These two domains are linked by a central stalk rotating inside the F(1) region and a stationary peripheral stalk. During catalysis, ATP synthesis in the catalytic domain of F(1) is coupled via a rotary mechanism of the central stalk subunits to proton translocation. With the subunit c (ATP5MC1), forms the proton-conducting channel in the F(0) domain, that contains two crucial half-channels (inlet and outlet) that facilitate proton movement from the mitochondrial intermembrane space (IMS) into the matrix. Protons are taken up via the inlet half-channel and released through the outlet half-channel, following a Grotthuss mechanism. The protein is ATP synthase F(0) complex subunit a of Struthio camelus (Common ostrich).